Consider the following 350-residue polypeptide: MSDQKKMTYKDAGVDIDAGNRFVQLIKPLVKATSRPEVLTDIGGFGGLFSLHADKYKKPTLVASTDGVGTKLKLAFMMDKHDTVGIDLVAMCVNDIVVQGAEPLFFLDYMATGKLTPEKAQDVVKGISEGCIQAGCALIGGETAEMPGFYGEGEYDLAGFTVGIVDNTSIIDGSGITVGDRLIGLASSGLHSNGYSLARKVLFEHLGLNADSKVEELDLSVGEELLKPTRIYVKTILNLLRDFQIKGMAHITGGGLVENVPRMMPKNCQAIIHKDSWPKPPIFELLRKAGNIEEEEMYRTLNYGIGMVLVVPETEAEEIMVRLSGLKEDAFIIGEIAKSAEEGEPTVTLI.

It belongs to the AIR synthase family.

It is found in the cytoplasm. The catalysed reaction is 2-formamido-N(1)-(5-O-phospho-beta-D-ribosyl)acetamidine + ATP = 5-amino-1-(5-phospho-beta-D-ribosyl)imidazole + ADP + phosphate + H(+). It functions in the pathway purine metabolism; IMP biosynthesis via de novo pathway; 5-amino-1-(5-phospho-D-ribosyl)imidazole from N(2)-formyl-N(1)-(5-phospho-D-ribosyl)glycinamide: step 2/2. In Syntrophotalea carbinolica (strain DSM 2380 / NBRC 103641 / GraBd1) (Pelobacter carbinolicus), this protein is Phosphoribosylformylglycinamidine cyclo-ligase.